A 943-amino-acid polypeptide reads, in one-letter code: Isoleucine--tRNA ligase (943 aa).

Positions 58–68 (PYANGNIHIGH) match the 'HIGH' region motif. Residue Glu-567 participates in L-isoleucyl-5'-AMP binding. Positions 608–612 (KMSKS) match the 'KMSKS' region motif. Residue Lys-611 coordinates ATP. Residues Cys-906, Cys-909, Cys-926, and Cys-929 each contribute to the Zn(2+) site.

It belongs to the class-I aminoacyl-tRNA synthetase family. IleS type 1 subfamily. Monomer. Requires Zn(2+) as cofactor.

It is found in the cytoplasm. The enzyme catalyses tRNA(Ile) + L-isoleucine + ATP = L-isoleucyl-tRNA(Ile) + AMP + diphosphate. In terms of biological role, catalyzes the attachment of isoleucine to tRNA(Ile). As IleRS can inadvertently accommodate and process structurally similar amino acids such as valine, to avoid such errors it has two additional distinct tRNA(Ile)-dependent editing activities. One activity is designated as 'pretransfer' editing and involves the hydrolysis of activated Val-AMP. The other activity is designated 'posttransfer' editing and involves deacylation of mischarged Val-tRNA(Ile). The chain is Isoleucine--tRNA ligase from Stutzerimonas stutzeri (strain A1501) (Pseudomonas stutzeri).